Consider the following 81-residue polypeptide: NADH-ubiquinone oxidoreductase chain 6 (81 aa).

3 consecutive transmembrane segments (helical) span residues 1–21 (MTYF…GVAS), 27–47 (YGVV…LSLG), and 48–68 (VSFV…VVFV).

It belongs to the complex I subunit 6 family.

The protein resides in the mitochondrion membrane. The catalysed reaction is a ubiquinone + NADH + 5 H(+)(in) = a ubiquinol + NAD(+) + 4 H(+)(out). Functionally, core subunit of the mitochondrial membrane respiratory chain NADH dehydrogenase (Complex I) that is believed to belong to the minimal assembly required for catalysis. Complex I functions in the transfer of electrons from NADH to the respiratory chain. The immediate electron acceptor for the enzyme is believed to be ubiquinone. The chain is NADH-ubiquinone oxidoreductase chain 6 (MT-ND6) from Anas platyrhynchos (Mallard).